The chain runs to 144 residues: uncharacterized protein (144 aa).

Residues 25–47 form a helical membrane-spanning segment; it reads LTLLDGCCVALVLALTAWSGFFV.

Its subcellular location is the membrane. This is an uncharacterized protein from Treponema pallidum (strain Nichols).